Consider the following 134-residue polypeptide: Ribosome-binding factor A (134 aa).

The protein belongs to the RbfA family. In terms of assembly, monomer. Binds 30S ribosomal subunits, but not 50S ribosomal subunits or 70S ribosomes.

The protein localises to the cytoplasm. One of several proteins that assist in the late maturation steps of the functional core of the 30S ribosomal subunit. Associates with free 30S ribosomal subunits (but not with 30S subunits that are part of 70S ribosomes or polysomes). Required for efficient processing of 16S rRNA. May interact with the 5'-terminal helix region of 16S rRNA. In Rhizobium leguminosarum bv. trifolii (strain WSM2304), this protein is Ribosome-binding factor A.